Here is a 301-residue protein sequence, read N- to C-terminus: Lipoyl synthase (301 aa).

The [4Fe-4S] cluster site is built by Cys53, Cys58, Cys64, Cys79, Cys83, Cys86, and Ser290. Residues 65–279 enclose the Radical SAM core domain; it reads WSRKTATYML…RIYGKSIGFK (215 aa).

Belongs to the radical SAM superfamily. Lipoyl synthase family. [4Fe-4S] cluster serves as cofactor.

Its subcellular location is the cytoplasm. It carries out the reaction [[Fe-S] cluster scaffold protein carrying a second [4Fe-4S](2+) cluster] + N(6)-octanoyl-L-lysyl-[protein] + 2 oxidized [2Fe-2S]-[ferredoxin] + 2 S-adenosyl-L-methionine + 4 H(+) = [[Fe-S] cluster scaffold protein] + N(6)-[(R)-dihydrolipoyl]-L-lysyl-[protein] + 4 Fe(3+) + 2 hydrogen sulfide + 2 5'-deoxyadenosine + 2 L-methionine + 2 reduced [2Fe-2S]-[ferredoxin]. Its pathway is protein modification; protein lipoylation via endogenous pathway; protein N(6)-(lipoyl)lysine from octanoyl-[acyl-carrier-protein]: step 2/2. In terms of biological role, catalyzes the radical-mediated insertion of two sulfur atoms into the C-6 and C-8 positions of the octanoyl moiety bound to the lipoyl domains of lipoate-dependent enzymes, thereby converting the octanoylated domains into lipoylated derivatives. The polypeptide is Lipoyl synthase (Leptospira interrogans serogroup Icterohaemorrhagiae serovar copenhageni (strain Fiocruz L1-130)).